The following is a 6269-amino-acid chain: Nonribosomal peptide synthetase 1 (6269 aa).

The tract at residues 249–781 (ENDWSRVCSF…VSGKLDRKSI (533 aa)) is adenylation 1. The Carrier 1 domain occupies 803–879 (RAANSTEDQL…ELATRVKGVT (77 aa)). At S840 the chain carries O-(pantetheine 4'-phosphoryl)serine. The interval 894 to 1342 (LSPIQKLHFM…TLSDFPMLSL (449 aa)) is epimerase 1. Residues 1373-1775 (SRMQQGILLS…FLQSLENIIH (403 aa)) are condensation 1. An adenylation 2 region spans residues 1725–2333 (HDPAEFPVYV…TGLLDRWFLR (609 aa)). A disordered region spans residues 2364–2386 (KPSPSQLLPSSTSATHRSSGTST). A compositionally biased stretch (low complexity) spans 2367-2376 (PSQLLPSSTS). The span at 2377–2386 (ATHRSSGTST) shows a compositional bias: polar residues. The tract at residues 2597-2670 (WRKYLADVES…TGSEEVCYGY (74 aa)) is condensation 2. Residues 2845–3368 (RCAHEIIEQQ…SGKLDRKKLR (524 aa)) form an adenylation 3 region. The 77-residue stretch at 3392 to 3468 (ASDEGVEGTL…NMAKRCGMLQ (77 aa)) folds into the Carrier 2 domain. An O-(pantetheine 4'-phosphoryl)serine modification is found at S3429. Residues 3512 to 3898 (CSPVQEGLLT…GQFSFVLEQL (387 aa)) form a condensation 3 region. The adenylation 4 stretch occupies residues 3919–4454 (DSKEVALWNK…VSGKLDRKKI (536 aa)). The Carrier 3 domain occupies 4487 to 4563 (EDKSTAAKIL…ELIQAAEVET (77 aa)). S4524 carries the post-translational modification O-(pantetheine 4'-phosphoryl)serine. The interval 4578 to 5024 (LSPIQNLYFK…DFPLLPITYD (447 aa)) is epimerase 2. The tract at residues 5052-5466 (SSVQEGILLS…PSQLVSELDL (415 aa)) is condensation 4. A Carrier 4 domain is found at 5552 to 5628 (SKLMEPEKRL…DMLAAISASN (77 aa)). S5589 bears the O-(pantetheine 4'-phosphoryl)serine mark. The interval 5628 to 5658 (NSSSALEPDSPADSNNEKPAEPPRLVELERN) is disordered. Over residues 5642–5657 (NNEKPAEPPRLVELER) the composition is skewed to basic and acidic residues. The tract at residues 5720–6067 (FFFDGRGSLD…SSSDGKLGVS (348 aa)) is condensation 5. In terms of domain architecture, Carrier 5 spans 6139–6220 (SDILVHSDVV…GQMAVLTLHN (82 aa)).

The protein belongs to the NRP synthetase family. The thiolation domains are 4'-phosphopantetheinylated.

In terms of biological role, nonribosomal peptide synthesis (NRPS) is a key mechanism responsible for the biosynthesis of bioactive metabolites which are potentially contributing to organismal virulence. Contributes to improved fungal tolerance against oxidative stress, during the infection process. The polypeptide is Nonribosomal peptide synthetase 1 (NRPS1) (Aspergillus fumigatus (strain ATCC MYA-4609 / CBS 101355 / FGSC A1100 / Af293) (Neosartorya fumigata)).